A 924-amino-acid polypeptide reads, in one-letter code: 104 kDa microneme/rhoptry antigen (924 aa).

Positions methionine 1–alanine 19 are cleaved as a signal peptide. The disordered stretch occupies residues serine 490–tyrosine 907. 2 stretches are compositionally biased toward basic and acidic residues: residues proline 522 to lysine 532 and glycine 573 to lysine 588. Residues proline 592–proline 617 are compositionally biased toward low complexity. Over residues serine 653 to lysine 673 the composition is skewed to basic and acidic residues. The segment covering serine 724–proline 736 has biased composition (low complexity). 3 stretches are compositionally biased toward basic and acidic residues: residues glutamate 737–proline 747, lysine 770–serine 783, and aspartate 816–serine 825. Residues aspartate 857 to glutamate 867 show a composition bias toward acidic residues. Residues threonine 868–glutamate 878 show a composition bias toward basic and acidic residues. A compositionally biased stretch (basic residues) spans valine 879–lysine 901. Aspartate 904 carries GPI-anchor amidated aspartate lipidation. The propeptide at serine 905 to leucine 924 is removed in mature form.

It localises to the cell membrane. This chain is 104 kDa microneme/rhoptry antigen, found in Theileria parva (East coast fever infection agent).